Here is a 381-residue protein sequence, read N- to C-terminus: 1-deoxy-D-xylulose 5-phosphate reductoisomerase (381 aa).

NADPH is bound by residues Thr-10, Gly-11, Ser-12, Ile-13, Gly-36, Lys-37, Asn-38, and Asn-120. Lys-121 is a binding site for 1-deoxy-D-xylulose 5-phosphate. Residue Glu-122 participates in NADPH binding. A Mn(2+)-binding site is contributed by Asp-146. 1-deoxy-D-xylulose 5-phosphate contacts are provided by Ser-147, Glu-148, Ser-172, and His-195. Glu-148 is a Mn(2+) binding site. Gly-201 contacts NADPH. Ser-208, Asn-213, Lys-214, and Glu-217 together coordinate 1-deoxy-D-xylulose 5-phosphate. Glu-217 serves as a coordination point for Mn(2+).

Belongs to the DXR family. Mg(2+) is required as a cofactor. It depends on Mn(2+) as a cofactor.

The enzyme catalyses 2-C-methyl-D-erythritol 4-phosphate + NADP(+) = 1-deoxy-D-xylulose 5-phosphate + NADPH + H(+). The protein operates within isoprenoid biosynthesis; isopentenyl diphosphate biosynthesis via DXP pathway; isopentenyl diphosphate from 1-deoxy-D-xylulose 5-phosphate: step 1/6. Its function is as follows. Catalyzes the NADPH-dependent rearrangement and reduction of 1-deoxy-D-xylulose-5-phosphate (DXP) to 2-C-methyl-D-erythritol 4-phosphate (MEP). This Lysinibacillus sphaericus (strain C3-41) protein is 1-deoxy-D-xylulose 5-phosphate reductoisomerase.